A 370-amino-acid polypeptide reads, in one-letter code: tRNA-specific 2-thiouridylase MnmA (370 aa).

ATP is bound by residues 25–32 (ALSGGVDS) and Leu51. The active-site Nucleophile is the Cys112. A disulfide bridge links Cys112 with Cys211. Gly137 lines the ATP pocket. The interval 161–163 (KDQ) is interaction with tRNA. The active-site Cysteine persulfide intermediate is the Cys211. The interaction with tRNA stretch occupies residues 316–317 (RY).

It belongs to the MnmA/TRMU family.

It localises to the cytoplasm. The enzyme catalyses S-sulfanyl-L-cysteinyl-[protein] + uridine(34) in tRNA + AH2 + ATP = 2-thiouridine(34) in tRNA + L-cysteinyl-[protein] + A + AMP + diphosphate + H(+). Its function is as follows. Catalyzes the 2-thiolation of uridine at the wobble position (U34) of tRNA, leading to the formation of s(2)U34. This Synechococcus sp. (strain JA-3-3Ab) (Cyanobacteria bacterium Yellowstone A-Prime) protein is tRNA-specific 2-thiouridylase MnmA.